The chain runs to 371 residues: Cathepsin W (371 aa).

An N-terminal signal peptide occupies residues 1–21 (MTLTAHLSYFLVLLLAGQGLS). Residues 22 to 125 (DSLLTKDAGP…KVESNTWGES (104 aa)) constitute a propeptide that is removed on maturation. Residues Asn48 and Asn112 are each glycosylated (N-linked (GlcNAc...) asparagine). 3 cysteine pairs are disulfide-bonded: Cys148–Cys189, Cys182–Cys224, and Cys282–Cys347. Cys151 is a catalytic residue. A glycan (N-linked (GlcNAc...) asparagine) is linked at Asn203. Catalysis depends on residues His289 and Asn326. An N-linked (GlcNAc...) asparagine glycan is attached at Asn344.

Belongs to the peptidase C1 family.

The protein resides in the endoplasmic reticulum. May have a specific function in the mechanism or regulation of T-cell cytolytic activity. This Mus musculus (Mouse) protein is Cathepsin W (Ctsw).